The following is a 129-amino-acid chain: HTH-type transcriptional regulator GlnR (129 aa).

Positions Leu-10–Met-78 constitute an HTH merR-type domain. The H-T-H motif DNA-binding region spans Ile-13–Glu-32.

In terms of assembly, homodimer under conditions of nitrogen excess. Monomer under conditions of nitrogen-limited. Interacts with feedback-inhibited GlnA in order to stabilizes GlnR-DNA complex.

Its activity is regulated as follows. Under conditions of nitrogen excess, the DNA binding activity of GlnR is activated by a transient interaction with feedback-inhibited GlnA. Under conditions of nitrogen-limited, GlnR is autoinhibited by its C-terminal region. Functionally, transcription repressor during nitrogen excess. On the contrary of the MerR members, which require longer DNA sites for high-affinity binding, GlnR requires a DNA sequence of 17 nucleotides as minimal binding site. The protein is HTH-type transcriptional regulator GlnR of Bacillus anthracis.